The primary structure comprises 347 residues: Glycerol-1-phosphate dehydrogenase [NAD(P)+] (347 aa).

Residues 90–94 and 112–115 contribute to the NAD(+) site; these read GRPVD and TAIS. Asp-117 is a binding site for substrate. Residue Ser-121 participates in NAD(+) binding. Asp-165 serves as a coordination point for substrate. Zn(2+) is bound by residues Asp-165 and His-245. His-249 is a substrate binding site. Position 262 (His-262) interacts with Zn(2+).

The protein belongs to the glycerol-1-phosphate dehydrogenase family. In terms of assembly, homodimer. Requires Zn(2+) as cofactor.

The protein resides in the cytoplasm. The catalysed reaction is sn-glycerol 1-phosphate + NAD(+) = dihydroxyacetone phosphate + NADH + H(+). It carries out the reaction sn-glycerol 1-phosphate + NADP(+) = dihydroxyacetone phosphate + NADPH + H(+). Its pathway is membrane lipid metabolism; glycerophospholipid metabolism. In terms of biological role, catalyzes the NAD(P)H-dependent reduction of dihydroxyacetonephosphate (DHAP or glycerone phosphate) to glycerol 1-phosphate (G1P). The G1P thus generated is used as the glycerophosphate backbone of phospholipids in the cellular membranes of Archaea. In Thermofilum pendens (strain DSM 2475 / Hrk 5), this protein is Glycerol-1-phosphate dehydrogenase [NAD(P)+].